Here is a 222-residue protein sequence, read N- to C-terminus: N-(5'-phosphoribosyl)anthranilate isomerase (222 aa).

The protein belongs to the TrpF family.

It carries out the reaction N-(5-phospho-beta-D-ribosyl)anthranilate = 1-(2-carboxyphenylamino)-1-deoxy-D-ribulose 5-phosphate. The protein operates within amino-acid biosynthesis; L-tryptophan biosynthesis; L-tryptophan from chorismate: step 3/5. This chain is N-(5'-phosphoribosyl)anthranilate isomerase, found in Rhizobium etli (strain CIAT 652).